We begin with the raw amino-acid sequence, 450 residues long: MSLPGLNFSTTETNTTESTHTIDLKPETEWRYEVAIGGTLHVTLKSGTAEIFGTELPPNKELSIQGKGSIYTWQGCQFVYTAIAGPKGLMSDYTTEDTPHMTMAINLHFALEKMRNEAEQKPKDVAGPRVLIAGPPNSGKTSLAKILLAYATKCDRKPIYISLDPTSVNLGPPGGVHAVQITDLLDVETYGGFGSSEISGPQKLQPLILLSKYFGLEKTTDNFKLFKRSVAQLAVPVLSKLAHDVEAQKSGLIIDTPRVPGNQNKTIEVNLLTDVVSDFGVNVIVVIGNDRLYADLMKKYPVGASGPTVVKVPAFACMDDDESYNRDAQQQEIQQYFYGDAKDMKLGPRIVTVDFSTLHVYKIKPSTQFDDDKADMLERVAEANILPNTVLTVMHAVPGSSEKEILDSEVQGYLHVTEVDEEKNKVKILTPVPGRLPSQVMLLGDTRYHE.

ATP contacts are provided by residues Glu29, Lys67, and 137–142; that span reads NSGKTS.

The protein belongs to the Clp1 family. Clp1 subfamily. In terms of assembly, component of a pre-mRNA cleavage factor complex. Interacts directly with PCF11.

Its subcellular location is the nucleus. Required for endonucleolytic cleavage during polyadenylation-dependent pre-mRNA 3'-end formation. In Yarrowia lipolytica (strain CLIB 122 / E 150) (Yeast), this protein is mRNA cleavage and polyadenylation factor CLP1.